A 450-amino-acid chain; its full sequence is Tubulin alpha chain (450 aa).

Residue Q11 participates in GTP binding. K40 is modified (N6-acetyllysine). Positions 71, 140, 144, 145, 179, 206, and 228 each coordinate GTP. Position 71 (E71) interacts with Mg(2+). The active site involves E254.

Belongs to the tubulin family. Dimer of alpha and beta chains. A typical microtubule is a hollow water-filled tube with an outer diameter of 25 nm and an inner diameter of 15 nM. Alpha-beta heterodimers associate head-to-tail to form protofilaments running lengthwise along the microtubule wall with the beta-tubulin subunit facing the microtubule plus end conferring a structural polarity. Microtubules usually have 13 protofilaments but different protofilament numbers can be found in some organisms and specialized cells. Mg(2+) is required as a cofactor. Post-translationally, acetylation of alpha chains at Lys-40 stabilizes microtubules and affects affinity and processivity of microtubule motors. This modification has a role in multiple cellular functions, ranging from cell motility, cell cycle progression or cell differentiation to intracellular trafficking and signaling.

It is found in the cytoplasm. Its subcellular location is the cytoskeleton. It carries out the reaction GTP + H2O = GDP + phosphate + H(+). Its function is as follows. Tubulin is the major constituent of microtubules, a cylinder consisting of laterally associated linear protofilaments composed of alpha- and beta-tubulin heterodimers. Microtubules grow by the addition of GTP-tubulin dimers to the microtubule end, where a stabilizing cap forms. Below the cap, tubulin dimers are in GDP-bound state, owing to GTPase activity of alpha-tubulin. This is Tubulin alpha chain from Tyrophagus putrescentiae (Mold mite).